The chain runs to 285 residues: MTKKIILPSPAKLNLFLYITNKRVDGYHELQTLFQFLDFGDDISLEVNESGEIELLNAIEGVAKEQNLIYRAAKLLQNHTACSKGAKIGVTKRLPMGGGVGGGSSNAATVLVGLNHFWQTGLSLEQLAELGLSLGADVPIFVRGFAAFAEGVGEKLVACQPRESWYVVLKPNVSISTAAVFQDPNLPRNTPKRTLSRLLSEEWTNDCEKVVRDHYFEVEDLIAELLQYATFRLTGTGACIFAEFESEAEAKAVFAHKPHNIFGFIAKGQNRSPLHQMLNLTTFPQ.

Residue Lys12 is part of the active site. 95–105 is a binding site for ATP; it reads PMGGGVGGGSS. Asp137 is a catalytic residue.

This sequence belongs to the GHMP kinase family. IspE subfamily.

It carries out the reaction 4-CDP-2-C-methyl-D-erythritol + ATP = 4-CDP-2-C-methyl-D-erythritol 2-phosphate + ADP + H(+). Its pathway is isoprenoid biosynthesis; isopentenyl diphosphate biosynthesis via DXP pathway; isopentenyl diphosphate from 1-deoxy-D-xylulose 5-phosphate: step 3/6. Its function is as follows. Catalyzes the phosphorylation of the position 2 hydroxy group of 4-diphosphocytidyl-2C-methyl-D-erythritol. This is 4-diphosphocytidyl-2-C-methyl-D-erythritol kinase from Actinobacillus pleuropneumoniae serotype 7 (strain AP76).